A 369-amino-acid chain; its full sequence is Biglycan (369 aa).

An N-terminal signal peptide occupies residues 1 to 16; the sequence is MRPLWLLTLLLALSQA. Positions 17-37 are excised as a propeptide; sequence LPFEQKGFWDFTLDDGLLMMN. Ser42 and Ser48 each carry an O-linked (Xyl...) (glycosaminoglycan) serine glycan. 2 cysteine pairs are disulfide-bonded: Cys64-Cys70 and Cys68-Cys77. LRR repeat units lie at residues 83–103, 104–127, 128–151, 152–172, 173–196, 197–221, 222–242, 243–266, 267–290, 291–313, 314–343, and 344–369; these read KTVP…NNDI, SELR…NNKI, SKIH…KNHL, VEIP…DNRI, RKVP…GNPL, ENSG…EAKL, TGIP…HNKI, QAIE…HNQI, RMIE…NNKL, SRVP…SNNI, TKVG…NNPV, and PYWE…NYKK. N-linked (GlcNAc...) asparagine glycosylation is found at Asn271 and Asn312. The cysteines at positions 322 and 355 are disulfide-linked.

This sequence belongs to the small leucine-rich proteoglycan (SLRP) family. SLRP class I subfamily. Homodimer. Forms a ternary complex with MFAP2 and ELN. In terms of processing, the two attached glycosaminoglycan chains can be either chondroitin sulfate or dermatan sulfate. In terms of tissue distribution, found in several connective tissues, especially in articular cartilages.

Its subcellular location is the secreted. It is found in the extracellular space. It localises to the extracellular matrix. In terms of biological role, may be involved in collagen fiber assembly. The sequence is that of Biglycan (Bgn) from Rattus norvegicus (Rat).